We begin with the raw amino-acid sequence, 52 residues long: Metallothionein-2 (52 aa).

2 repeats span residues 43–47 (QTCKC) and 48–52 (QTCKC).

Belongs to the metallothionein superfamily. Type 10 family.

Functionally, the metallothioneins are involved in the cellular sequestration of toxic metal ions. The chain is Metallothionein-2 (MT-II) from Candida glabrata (strain ATCC 2001 / BCRC 20586 / JCM 3761 / NBRC 0622 / NRRL Y-65 / CBS 138) (Yeast).